Reading from the N-terminus, the 497-residue chain is Probable malate:quinone oxidoreductase (497 aa).

Belongs to the MQO family. FAD is required as a cofactor.

The enzyme catalyses (S)-malate + a quinone = a quinol + oxaloacetate. It functions in the pathway carbohydrate metabolism; tricarboxylic acid cycle; oxaloacetate from (S)-malate (quinone route): step 1/1. This chain is Probable malate:quinone oxidoreductase, found in Exiguobacterium sibiricum (strain DSM 17290 / CCUG 55495 / CIP 109462 / JCM 13490 / 255-15).